Consider the following 132-residue polypeptide: Translation initiation factor 5A (132 aa).

Lys36 carries the hypusine modification.

It belongs to the eIF-5A family.

It localises to the cytoplasm. In terms of biological role, functions by promoting the formation of the first peptide bond. This Desulfurococcus amylolyticus (strain DSM 18924 / JCM 16383 / VKM B-2413 / 1221n) (Desulfurococcus kamchatkensis) protein is Translation initiation factor 5A (eIF5A).